Here is a 210-residue protein sequence, read N- to C-terminus: Putative protein-lysine deacylase ABHD14B (210 aa).

Ser91 carries the post-translational modification Phosphoserine. Residues Ser111, Asp162, and His188 each act as charge relay system in the active site.

It belongs to the AB hydrolase superfamily. ABHD14 family. May interact with TAF1.

The protein localises to the cytoplasm. Its subcellular location is the nucleus. The catalysed reaction is L-lysyl-[protein] + acetyl-CoA = N(6)-acetyl-L-lysyl-[protein] + CoA + H(+). In terms of biological role, acts as an atypical protein-lysine deacetylase in vitro. Catalyzes the deacetylation of lysine residues using CoA as substrate, generating acetyl-CoA and the free amine of protein-lysine residues. Additional experiments are however required to confirm the protein-lysine deacetylase activity in vivo. Has hydrolase activity towards various surrogate p-nitrophenyl (pNp) substrates, such as pNp-butyrate, pNp-acetate and pNp-octanoate in vitro, with a strong preference for pNp-acetate. May activate transcription. The chain is Putative protein-lysine deacylase ABHD14B from Rattus norvegicus (Rat).